The following is a 118-amino-acid chain: Large ribosomal subunit protein bL21c (118 aa).

This sequence belongs to the bacterial ribosomal protein bL21 family. In terms of assembly, part of the 50S ribosomal subunit.

It localises to the plastid. The protein localises to the chloroplast. Its function is as follows. This protein binds to 23S rRNA. This is Large ribosomal subunit protein bL21c from Anthoceros angustus (Hornwort).